Consider the following 1375-residue polypeptide: DNA-directed RNA polymerase subunit beta (1375 aa).

It belongs to the RNA polymerase beta chain family. As to quaternary structure, the RNAP catalytic core consists of 2 alpha, 1 beta, 1 beta' and 1 omega subunit. When a sigma factor is associated with the core the holoenzyme is formed, which can initiate transcription.

The enzyme catalyses RNA(n) + a ribonucleoside 5'-triphosphate = RNA(n+1) + diphosphate. In terms of biological role, DNA-dependent RNA polymerase catalyzes the transcription of DNA into RNA using the four ribonucleoside triphosphates as substrates. This is DNA-directed RNA polymerase subunit beta from Coxiella burnetii (strain RSA 331 / Henzerling II).